Here is a 585-residue protein sequence, read N- to C-terminus: Pyruvate kinase (585 aa).

Residue Arg-32 coordinates substrate. Positions 34, 36, 66, and 67 each coordinate K(+). 34–37 (NFSH) is a binding site for ATP. The ATP site is built by Arg-73 and Lys-156. Glu-221 is a binding site for Mg(2+). Gly-244, Asp-245, and Thr-277 together coordinate substrate. Asp-245 provides a ligand contact to Mg(2+).

This sequence belongs to the pyruvate kinase family. In the C-terminal section; belongs to the PEP-utilizing enzyme family. Mg(2+) serves as cofactor. Requires K(+) as cofactor.

It carries out the reaction pyruvate + ATP = phosphoenolpyruvate + ADP + H(+). Its pathway is carbohydrate degradation; glycolysis; pyruvate from D-glyceraldehyde 3-phosphate: step 5/5. The polypeptide is Pyruvate kinase (pyk) (Staphylococcus aureus (strain bovine RF122 / ET3-1)).